The chain runs to 346 residues: MNIAILFGGSSFEHEISIVSAITMKKVLKKSTLTYIFVSADRKFYLIDTEKINSKLFSSGEYKKGKQLVLKNDGFFTKGMFGSKQVAFDVLLNLIHGRDGEDGKVASMMEFFNIPYISPRLEASAMSYNKLYTKFLAESLGVKTVPYEHLSKNGDRKISMEYPVIIKPVRLGSSIGVSIVKSEAELDYALDVAFEFDNDVIVEPFIDGVKEFNQAGCHTGDWELSIVEEPQKEEFLDFEKKYMDFSRDSQVLSADISEELKNNIQVTFKKIYDPLFMGSIIRCDFFVVNDEILLNEINPIPGSMANYLFPDFEGMVWRLSKALPKEKNISIDYTYIHSIQSAKGKA.

The ATP-grasp domain maps to 134–340; that stretch reads KFLAESLGVK…IDYTYIHSIQ (207 aa). ATP is bound at residue 161–212; that stretch reads EYPVIIKPVRLGSSIGVSIVKSEAELDYALDVAFEFDNDVIVEPFIDGVKEF. The Mg(2+) site is built by D284, E296, and N298.

The protein belongs to the D-alanine--D-alanine ligase family. Requires Mg(2+) as cofactor. Mn(2+) serves as cofactor.

It is found in the cytoplasm. The enzyme catalyses 2 D-alanine + ATP = D-alanyl-D-alanine + ADP + phosphate + H(+). It functions in the pathway cell wall biogenesis; peptidoglycan biosynthesis. Functionally, cell wall formation. The protein is D-alanine--D-alanine ligase of Sulfurovum sp. (strain NBC37-1).